The sequence spans 532 residues: MSNDGSKILNYTPVSKIDEIVEISRNFFFEKQLKLSHENNPRKKDLEFRQLQLKKLYYAVKDHEEELIDAMYKDFHRNKIESVLNETTKLMNDILHLIEILPKLIKPRRVSDSSPPFMFGKTIVEKISRGSVLIIAPFNFPLLLAFAPLAAALAAGNTIVLKPSELTPHTAVVMENLLTTAGFPDGLIQVVQGAIDETTRLLDCGKFDLIFYTGSPRVGSIVAEKAAKSLTPCVLELGGKSPTFITENFKASNIKIALKRIFFGAFGNSGQICVSPDYLLVHKSIYPKVIKECESVLNEFYPSFDEQTDFTRMIHEPAYKKAVASINSTNGSKIVPSKISINSDTEDLCLVPPTIVYNIGWDDPLMKQENFAPVLPIIEYEDLDETINKIIEEHDTPLVQYIFSDSQTEINRILTRLRSGDCVVGDTVIHVGITDAPFGGIGTSGYGNYGGYYGFNTFSHERTIFKQPYWNDFTLFMRYPPNSAQKEKLVRFAMERKPWFDRNGNNKWGLRQYFSLSAAVILISTIYAHCSS.

Residue Ser111 is modified to Phosphoserine. Residues 134–152 traverse the membrane as a helical segment; sequence IIAPFNFPLLLAFAPLAAA. 214–219 contributes to the NAD(+) binding site; the sequence is GSPRVG. Catalysis depends on residues Glu236 and Cys273.

It belongs to the aldehyde dehydrogenase family.

It localises to the lipid droplet. The protein resides in the mitochondrion outer membrane. Its subcellular location is the endosome membrane. The protein localises to the cytoplasmic granule membrane. It catalyses the reaction an aldehyde + NAD(+) + H2O = a carboxylate + NADH + 2 H(+). The enzyme catalyses hexadecanoate + NADH + 2 H(+) = hexadecanal + NAD(+) + H2O. It carries out the reaction 4-hydroxybenzaldehyde + NAD(+) + H2O = 4-hydroxybenzoate + NADH + 2 H(+). Catalyzes the oxidation of long-chain aliphatic aldehydes to fatty acids. Responsible for conversion of the sphingosine 1-phosphate (S1P) degradation product hexadecenal to hexadecenoic acid. Involved in coenzyme Q (CoQ) biosynthesis, catalyzing the last step in the tyrosine to 4-hydroxybenzoate (4-HB) pathway. Oxidizes 4-hydroxybenzaldehyde (4-Hbz) to 4-HB, the aromatic precursor for coenzyme Q. In Saccharomyces cerevisiae (strain ATCC 204508 / S288c) (Baker's yeast), this protein is Fatty aldehyde dehydrogenase HFD1 (HFD1).